Reading from the N-terminus, the 22-residue chain is Large ribosomal subunit protein bL32 (22 aa).

Residues 1–22 (CVPKRKVSPSXRNMRXAHDXLT) are disordered.

This sequence belongs to the bacterial ribosomal protein bL32 family.

This chain is Large ribosomal subunit protein bL32 (rpmF), found in Brevundimonas vesicularis (Pseudomonas vesicularis).